Reading from the N-terminus, the 533-residue chain is Glucosidase 2 subunit beta (533 aa).

A signal peptide spans Met1–Ala13. Ser23 carries the phosphoserine modification. 2 LDL-receptor class A domains span residues Phe36 to Pro70 and Asn71 to Glu112. Disulfide bonds link Cys38/Cys57 and Cys55/Cys69. Residue Asp48 participates in substrate binding. Positions 49, 52, 54, 56, 62, and 63 each coordinate Ca(2+). Position 52 (Asp52) interacts with substrate. N-linked (GlcNAc...) asparagine glycosylation is present at Asn71. Disulfide bonds link Cys76-Cys98, Cys96-Cys111, and Cys99-Cys115. At Ser88 the chain carries Phosphoserine; by PKC. Residues Asp93, Val95, Asp97, Asp103, and Glu104 each coordinate Ca(2+). N6-succinyllysine is present on Lys165. Ser167 carries the phosphoserine modification. 2 consecutive EF-hand domains span residues Arg208–Gly243 and Asp244–Tyr279. Residues Asp221, Asp223, Asp225, and Glu232 each coordinate Ca(2+). The disordered stretch occupies residues Leu284 to Pro363. Residues Thr312–Gln336 show a composition bias toward acidic residues. Residues Ser388 and Ser395 each carry the phosphoserine; by PKC modification. The MRH domain occupies Ser418–Glu519. The cysteines at positions 420 and 433 are disulfide-linked. Ser439 is subject to Phosphoserine; by PKC. Cystine bridges form between Cys476–Cys505 and Cys490–Cys517. An N-linked (GlcNAc...) asparagine glycan is attached at Asn481. Residues His530–Leu533 carry the Prevents secretion from ER motif.

Heterodimer of a catalytic alpha subunit (GANAB) and a beta subunit (PRKCSH). Binds glycosylated PTPRC. In terms of tissue distribution, ubiquitous. Highly expressed in liver, spleen, lung, duodenum, stomach, adrenal gland, pituitary, testis, corpus luteum, uterus and fetal ovary.

It is found in the endoplasmic reticulum. Its pathway is glycan metabolism; N-glycan metabolism. Its function is as follows. Regulatory subunit of glucosidase II that cleaves sequentially the 2 innermost alpha-1,3-linked glucose residues from the Glc(2)Man(9)GlcNAc(2) oligosaccharide precursor of immature glycoproteins. Required for efficient PKD1/Polycystin-1 biogenesis and trafficking to the plasma membrane of the primary cilia. This is Glucosidase 2 subunit beta (PRKCSH) from Bos taurus (Bovine).